A 64-amino-acid chain; its full sequence is uncharacterized protein (64 aa).

This is an uncharacterized protein from Sulfolobus islandicus rod-shaped virus 1 (SIRV-1).